The following is a 387-amino-acid chain: 1-deoxy-D-xylulose 5-phosphate reductoisomerase (387 aa).

T10, G11, S12, I13, and N124 together coordinate NADPH. K125 contacts 1-deoxy-D-xylulose 5-phosphate. Position 126 (E126) interacts with NADPH. D150 is a Mn(2+) binding site. Residues S151, E152, S176, and H199 each coordinate 1-deoxy-D-xylulose 5-phosphate. E152 provides a ligand contact to Mn(2+). Position 205 (G205) interacts with NADPH. 1-deoxy-D-xylulose 5-phosphate-binding residues include S212, N217, K218, and E221. Mn(2+) is bound at residue E221.

It belongs to the DXR family. The cofactor is Mg(2+). Requires Mn(2+) as cofactor.

It catalyses the reaction 2-C-methyl-D-erythritol 4-phosphate + NADP(+) = 1-deoxy-D-xylulose 5-phosphate + NADPH + H(+). The protein operates within isoprenoid biosynthesis; isopentenyl diphosphate biosynthesis via DXP pathway; isopentenyl diphosphate from 1-deoxy-D-xylulose 5-phosphate: step 1/6. In terms of biological role, catalyzes the NADPH-dependent rearrangement and reduction of 1-deoxy-D-xylulose-5-phosphate (DXP) to 2-C-methyl-D-erythritol 4-phosphate (MEP). In Clostridium beijerinckii (strain ATCC 51743 / NCIMB 8052) (Clostridium acetobutylicum), this protein is 1-deoxy-D-xylulose 5-phosphate reductoisomerase.